A 393-amino-acid chain; its full sequence is Elongation factor Tu (393 aa).

The 194-residue stretch at 10–203 (KPHVNIGTIG…AVDSYIPEPV (194 aa)) folds into the tr-type G domain. Residues 19–26 (GHVDHGKT) are G1. 19–26 (GHVDHGKT) contributes to the GTP binding site. A Mg(2+)-binding site is contributed by T26. The segment at 60 to 64 (GITIS) is G2. The interval 81 to 84 (DCPG) is G3. GTP is bound by residues 81–85 (DCPGH) and 136–139 (NKVD). Residues 136–139 (NKVD) are G4. The segment at 173–175 (SAL) is G5.

It belongs to the TRAFAC class translation factor GTPase superfamily. Classic translation factor GTPase family. EF-Tu/EF-1A subfamily. In terms of assembly, monomer.

Its subcellular location is the cytoplasm. It catalyses the reaction GTP + H2O = GDP + phosphate + H(+). Functionally, GTP hydrolase that promotes the GTP-dependent binding of aminoacyl-tRNA to the A-site of ribosomes during protein biosynthesis. This chain is Elongation factor Tu, found in Prosthecochloris aestuarii (strain DSM 271 / SK 413).